The following is a 339-amino-acid chain: Photosystem II assembly lipoprotein Ycf48 (339 aa).

Residues 1–23 (MNRLIKFSFNLILIFVLGLGLSG) form the signal peptide. C24 carries the N-palmitoyl cysteine lipid modification. A lipid anchor (S-diacylglycerol cysteine) is attached at C24.

This sequence belongs to the Ycf48 family. As to quaternary structure, part of early PSII assembly complexes which includes D1 (psbA) and PsbI; not found in mature PSII. Binds to the lumenal side of PSII complexes. Interacts with YidC.

It is found in the cellular thylakoid membrane. Its function is as follows. A factor required for optimal assembly of photosystem II (PSII), acting in the early stages of PSII assembly. Also plays a role in replacement of photodamaged D1 (psbA). Assists YidC in synthesis of chlorophyll-binding proteins. The polypeptide is Photosystem II assembly lipoprotein Ycf48 (Prochlorococcus marinus (strain SARG / CCMP1375 / SS120)).